The primary structure comprises 315 residues: uncharacterized protein (315 aa).

Helical transmembrane passes span 18–38 (IWFIIFYLFVIQALGSAIISG), 202–222 (ILAIAMFIVIWPVTMGILAGI), and 244–264 (LIYAVVIAFVCTPVAIIVIVL). The interval 288–315 (VCSTGNRSSGSTDQDISTTKQQSQEAVA) is disordered.

The protein resides in the membrane. This is an uncharacterized protein from Saccharomyces cerevisiae (strain ATCC 204508 / S288c) (Baker's yeast).